The following is a 449-amino-acid chain: Tubulin beta-2 chain (449 aa).

The GTP site is built by Gln-11 and Glu-69. Glu-69 provides a ligand contact to Mg(2+). Position 137 is a methylhistidine (His-137). GTP is bound by residues Ser-138, Gly-142, Thr-143, Gly-144, Asn-204, and Asn-226.

It belongs to the tubulin family. In terms of assembly, dimer of alpha and beta chains. A typical microtubule is a hollow water-filled tube with an outer diameter of 25 nm and an inner diameter of 15 nM. Alpha-beta heterodimers associate head-to-tail to form protofilaments running lengthwise along the microtubule wall with the beta-tubulin subunit facing the microtubule plus end conferring a structural polarity. Microtubules usually have 13 protofilaments but different protofilament numbers can be found in some organisms and specialized cells. The cofactor is Mg(2+).

It is found in the cytoplasm. The protein localises to the cytoskeleton. In terms of biological role, tubulin is the major constituent of microtubules, a cylinder consisting of laterally associated linear protofilaments composed of alpha- and beta-tubulin heterodimers. Microtubules grow by the addition of GTP-tubulin dimers to the microtubule end, where a stabilizing cap forms. Below the cap, tubulin dimers are in GDP-bound state, owing to GTPase activity of alpha-tubulin. The sequence is that of Tubulin beta-2 chain (tubC) from Emericella nidulans (strain FGSC A4 / ATCC 38163 / CBS 112.46 / NRRL 194 / M139) (Aspergillus nidulans).